Here is a 418-residue protein sequence, read N- to C-terminus: Dual-specificity RNA methyltransferase RlmN (418 aa).

The tract at residues 1–21 is disordered; that stretch reads MADTSLMPIPGQVDPVPAPRD. Residue Glu-122 is the Proton acceptor of the active site. One can recognise a Radical SAM core domain in the interval 128 to 383; that stretch reads DADRGTLCVS…APVRTPRGRD (256 aa). Cysteines 135 and 388 form a disulfide. Residues Cys-142, Cys-146, and Cys-149 each coordinate [4Fe-4S] cluster. S-adenosyl-L-methionine is bound by residues 212–213, Ser-244, 266–268, and Asn-345; these read GE and SLH. The S-methylcysteine intermediate role is filled by Cys-388. The segment at 393–418 is disordered; it reads TAAQKKSRAERDREAAAEAEAAASQA. The span at 399–408 shows a compositional bias: basic and acidic residues; it reads SRAERDREAA.

The protein belongs to the radical SAM superfamily. RlmN family. Requires [4Fe-4S] cluster as cofactor.

It is found in the cytoplasm. The catalysed reaction is adenosine(2503) in 23S rRNA + 2 reduced [2Fe-2S]-[ferredoxin] + 2 S-adenosyl-L-methionine = 2-methyladenosine(2503) in 23S rRNA + 5'-deoxyadenosine + L-methionine + 2 oxidized [2Fe-2S]-[ferredoxin] + S-adenosyl-L-homocysteine. The enzyme catalyses adenosine(37) in tRNA + 2 reduced [2Fe-2S]-[ferredoxin] + 2 S-adenosyl-L-methionine = 2-methyladenosine(37) in tRNA + 5'-deoxyadenosine + L-methionine + 2 oxidized [2Fe-2S]-[ferredoxin] + S-adenosyl-L-homocysteine. Specifically methylates position 2 of adenine 2503 in 23S rRNA and position 2 of adenine 37 in tRNAs. m2A2503 modification seems to play a crucial role in the proofreading step occurring at the peptidyl transferase center and thus would serve to optimize ribosomal fidelity. In Erythrobacter litoralis (strain HTCC2594), this protein is Dual-specificity RNA methyltransferase RlmN.